Consider the following 128-residue polypeptide: Probable 4-amino-4-deoxy-L-arabinose-phosphoundecaprenol flippase subunit ArnF (128 aa).

The Cytoplasmic segment spans residues 1–2; the sequence is MG. Residues 3–23 traverse the membrane as a helical segment; it reads LMWGLFSVIIASAAQLSMGFA. The Periplasmic portion of the chain corresponds to 24-35; that stretch reads ASHLPPMTHLWD. A helical transmembrane segment spans residues 36–56; sequence FIAALLAFGLDARILLLGLLG. The Cytoplasmic portion of the chain corresponds to 57 to 76; that stretch reads YLLSVFCWYKTLHKLALSKA. A helical transmembrane segment spans residues 77–97; sequence YALLSMSYVLVWIASMVLPGW. At 98–100 the chain is on the periplasmic side; it reads EGT. Residues 101-121 traverse the membrane as a helical segment; sequence FSLKALLGVACIMSGLMLIFL. At 122 to 128 the chain is on the cytoplasmic side; sequence PTTKQRY.

Belongs to the ArnF family. In terms of assembly, heterodimer of ArnE and ArnF.

The protein localises to the cell inner membrane. It participates in bacterial outer membrane biogenesis; lipopolysaccharide biosynthesis. In terms of biological role, translocates 4-amino-4-deoxy-L-arabinose-phosphoundecaprenol (alpha-L-Ara4N-phosphoundecaprenol) from the cytoplasmic to the periplasmic side of the inner membrane. The protein is Probable 4-amino-4-deoxy-L-arabinose-phosphoundecaprenol flippase subunit ArnF of Escherichia coli O45:K1 (strain S88 / ExPEC).